The sequence spans 152 residues: Protein Smg homolog (152 aa).

The protein belongs to the Smg family.

In Nitrosomonas eutropha (strain DSM 101675 / C91 / Nm57), this protein is Protein Smg homolog.